Consider the following 224-residue polypeptide: Protein LURP-one-related 1 (224 aa).

Residues 1–23 (MQQPYEYRYPQGTGPSAPPPPPK) form a disordered region.

It belongs to the LOR family.

Might be related to the phospholipid scramblase and tubby-like superfamily of membrane tethered transcription factors. This chain is Protein LURP-one-related 1, found in Arabidopsis thaliana (Mouse-ear cress).